Reading from the N-terminus, the 430-residue chain is Glutamate-1-semialdehyde 2,1-aminomutase (430 aa).

At Lys-265 the chain carries N6-(pyridoxal phosphate)lysine.

The protein belongs to the class-III pyridoxal-phosphate-dependent aminotransferase family. HemL subfamily. As to quaternary structure, homodimer. It depends on pyridoxal 5'-phosphate as a cofactor.

The protein resides in the cytoplasm. It catalyses the reaction (S)-4-amino-5-oxopentanoate = 5-aminolevulinate. It participates in porphyrin-containing compound metabolism; protoporphyrin-IX biosynthesis; 5-aminolevulinate from L-glutamyl-tRNA(Glu): step 2/2. The chain is Glutamate-1-semialdehyde 2,1-aminomutase from Helicobacter pylori (strain HPAG1).